A 260-amino-acid chain; its full sequence is Type III pantothenate kinase (260 aa).

6 to 13 (DVGNTNIT) is an ATP binding site. 107 to 110 (GADR) provides a ligand contact to substrate. The active-site Proton acceptor is aspartate 109. Aspartate 129 is a binding site for K(+). Position 132 (threonine 132) interacts with ATP. Threonine 184 contacts substrate.

It belongs to the type III pantothenate kinase family. Homodimer. Requires NH4(+) as cofactor. K(+) serves as cofactor.

The protein resides in the cytoplasm. It carries out the reaction (R)-pantothenate + ATP = (R)-4'-phosphopantothenate + ADP + H(+). It functions in the pathway cofactor biosynthesis; coenzyme A biosynthesis; CoA from (R)-pantothenate: step 1/5. Catalyzes the phosphorylation of pantothenate (Pan), the first step in CoA biosynthesis. This Agathobacter rectalis (strain ATCC 33656 / DSM 3377 / JCM 17463 / KCTC 5835 / VPI 0990) (Eubacterium rectale) protein is Type III pantothenate kinase.